The following is a 36-amino-acid chain: Kappa-theraphotoxin-Pg1b (36 aa).

Cystine bridges form between C4–C19, C11–C24, and C18–C31.

It belongs to the neurotoxin 10 (Hwtx-1) family. 44 (Jztx-4) subfamily. Expressed by the venom gland.

The protein localises to the secreted. Functionally, gating modifier of Kv2.1/KCNB1, Kv2.2/KCNB2 and Kv4.3/KCND3 channels. In Chilobrachys guangxiensis (Chinese earth tiger tarantula), this protein is Kappa-theraphotoxin-Pg1b.